A 375-amino-acid chain; its full sequence is MAKQDYYELLGISRSADEKEIKRAYKKLAMQYHPDRTKGDKEKEEKFKEIQEAYEVLNDKEKRAAYDQYGHAAFEQGTGFGGGSFGGADFGDIFGDMFGDIFGGGGRGRQRVVRGDDLRYDIEITLEEAVKGTTKDIKIHTLAPCDTCHGTGAEAGSKVETCPHCHGAGRLRRQQGFFVTEQPCHFCHGTGKKIEKPCKTCHGDGRVNKAKNLSVKIPAGVDTGNQLRLSGEGAAGENGAPAGDLYVVIHVKEHHIFERDGSNLYCEVPISFTMAALGGEIEVPTLDGRVKLKIPEETQTGKLFRMRGKGVTSTRSGYAGDLTCRIIVETPVKLNEEQKELLRKLEESLEGQTKQRPKSSSFLDGVKRFFDDLTK.

In terms of domain architecture, J spans 5–70 (DYYELLGISR…EKRAAYDQYG (66 aa)). A CR-type zinc finger spans residues 132–210 (GTTKDIKIHT…CHGDGRVNKA (79 aa)). Residues Cys145, Cys148, Cys162, Cys165, Cys184, Cys187, Cys198, and Cys201 each coordinate Zn(2+). 4 CXXCXGXG motif repeats span residues 145-152 (CDTCHGTG), 162-169 (CPHCHGAG), 184-191 (CHFCHGTG), and 198-205 (CKTCHGDG).

It belongs to the DnaJ family. Homodimer. Requires Zn(2+) as cofactor.

Its subcellular location is the cytoplasm. Its function is as follows. Participates actively in the response to hyperosmotic and heat shock by preventing the aggregation of stress-denatured proteins and by disaggregating proteins, also in an autonomous, DnaK-independent fashion. Unfolded proteins bind initially to DnaJ; upon interaction with the DnaJ-bound protein, DnaK hydrolyzes its bound ATP, resulting in the formation of a stable complex. GrpE releases ADP from DnaK; ATP binding to DnaK triggers the release of the substrate protein, thus completing the reaction cycle. Several rounds of ATP-dependent interactions between DnaJ, DnaK and GrpE are required for fully efficient folding. Also involved, together with DnaK and GrpE, in the DNA replication of plasmids through activation of initiation proteins. The polypeptide is Chaperone protein DnaJ (Aggregatibacter actinomycetemcomitans (Actinobacillus actinomycetemcomitans)).